Here is a 214-residue protein sequence, read N- to C-terminus: Adenylate kinase (214 aa).

An ATP-binding site is contributed by 10–15 (GAGKGT). The NMP stretch occupies residues 30–59 (STGDMFREEISAKSELGRKVEDILKRGELV). AMP-binding positions include threonine 31, arginine 36, 57 to 59 (ELV), 85 to 88 (GYPR), and glutamine 92. The LID stretch occupies residues 126–163 (NRRICKNCGKIYNLITLPPKINGKCDVCGGELYQREDD). Arginine 127 serves as a coordination point for ATP. Residues cysteine 130 and cysteine 133 each coordinate Zn(2+). ATP is bound at residue 136 to 137 (IY). The Zn(2+) site is built by cysteine 150 and cysteine 153. Residues arginine 160 and arginine 171 each coordinate AMP. Methionine 199 is a binding site for ATP.

This sequence belongs to the adenylate kinase family. Monomer.

Its subcellular location is the cytoplasm. It catalyses the reaction AMP + ATP = 2 ADP. The protein operates within purine metabolism; AMP biosynthesis via salvage pathway; AMP from ADP: step 1/1. In terms of biological role, catalyzes the reversible transfer of the terminal phosphate group between ATP and AMP. Plays an important role in cellular energy homeostasis and in adenine nucleotide metabolism. This chain is Adenylate kinase, found in Thermosipho melanesiensis (strain DSM 12029 / CIP 104789 / BI429).